Here is a 205-residue protein sequence, read N- to C-terminus: Small ribosomal subunit protein uS4 (205 aa).

Basic residues predominate over residues 1–12 (MSKRIQAKHKLD). The segment at 1 to 49 (MSKRIQAKHKLDRRMGQNIWGRPKSPVNRREYGPGQHGQRRKGKLSDFG) is disordered. Positions 94 to 156 (RRLDAVIYRA…SKQLEIVVVA (63 aa)) constitute an S4 RNA-binding domain.

This sequence belongs to the universal ribosomal protein uS4 family. As to quaternary structure, part of the 30S ribosomal subunit. Contacts protein S5. The interaction surface between S4 and S5 is involved in control of translational fidelity.

Its function is as follows. One of the primary rRNA binding proteins, it binds directly to 16S rRNA where it nucleates assembly of the body of the 30S subunit. In terms of biological role, with S5 and S12 plays an important role in translational accuracy. This Methylobacterium nodulans (strain LMG 21967 / CNCM I-2342 / ORS 2060) protein is Small ribosomal subunit protein uS4.